Here is a 942-residue protein sequence, read N- to C-terminus: MADPARRDPRGRAPELPGDLSSQEEEEEESDSDAGASSLGSCSSASSDTDLEPEWLDSVQRNGELFYLELSEDEEESLLPETQTVNHVNHVRFSEKEVIIEEDDSRERKKYEPKLRRFTKILKSKSLLPKRHHKKKSSNTGPVSILKHQSTQRTGVTVQQRYKDVTVYINPKKLTAIKAREQAKLLEVLVGVIHQTKWSWKRSGKQADGERLVVHGLVPGGSAMKSGQVLVGDVLVAVNDVDVTSENIERVLSCIPGPMQVKLTFENAYAVKKETAQPKKKKAQSSTNDLVKLLCGSEADATQHSTLSIPHITMYLTLQLQSEVAREEQEMLYHYPVSEASQKLKSVRGIFLTLCDMLESVTGTQVTSSSLHVNGKQIHVAYLKESDKLLLIGLPAEEVPLPQLRNMTEDVAQTLKFMYGSLDSAFCQVENTPRLDHFFSLFFERALRPGKLHLSASPSAQQYDAASAVLLDNLPGVRWLLLPQELKVELDTALSDLEAADFQELSEDYYDMRRLYTILGSSLFYKGYMVCSHLPKDDVVEIAAYCRQYCLLPLAAQQRIGQLIIWREVFPQHHLQPATDSDPEAFQEPEGRYFLLIVGLRHYMLCVLLEAGGCASKATGNPGPDCIYVDQARATLHQLEGVESRIEEQLAATPGPCLSCADWFLAAPREKADSLTTSPILGRLQGPSKTAASPTCRRTFFSDYSFKARKPSPSRIGGGREPGEGEENVGLSPHTTPDTVRKQRESEGSDDNVALLKLARKKSTLPNPFHLGTSKKELSEKELEVYNMMKLTSGPENTLFHYVALETVQGIFITPTHEEVAQLGGSVHSQLIKNFHRCCLTIRAVFQQTLKVEKKKALSDGDHLESANSVSSLSPVKEHGVLFECSPENWTDQKKTPPVMSYWVVGRLFLNPKPQELYVCFHDSVSEIAIEMAFRLFFGLTL.

Over residues 1-13 (MADPARRDPRGRA) the composition is skewed to basic and acidic residues. 2 disordered regions span residues 1-54 (MADP…LEPE) and 129-150 (PKRH…KHQS). A compositionally biased stretch (acidic residues) spans 22–32 (SQEEEEEESDS). Over residues 33 to 48 (DAGASSLGSCSSASSD) the composition is skewed to low complexity. A compositionally biased stretch (polar residues) spans 138 to 150 (SNTGPVSILKHQS). One can recognise a PDZ domain in the interval 189–267 (LVGVIHQTKW…PMQVKLTFEN (79 aa)). 2 positions are modified to phosphoserine: Ser-674 and Ser-678. Residues 707–752 (KARKPSPSRIGGGREPGEGEENVGLSPHTTPDTVRKQRESEGSDDN) form a disordered region.

This sequence belongs to the inturned family. As to quaternary structure, component of the CPLANE (ciliogenesis and planar polarity effectors) complex, composed of INTU, FUZ and WDPCP. Interacts with CPLANE1. Interacts with NPHP4 and DAAM1; INTU is mediating the interaction between NPHP4 and DAAM1.

It is found in the cytoplasm. The protein localises to the cell surface. The protein resides in the cytoskeleton. Its subcellular location is the cilium basal body. It localises to the microtubule organizing center. It is found in the centrosome. The protein localises to the centriole. In terms of biological role, plays a key role in ciliogenesis and embryonic development. Regulator of cilia formation by controlling the organization of the apical actin cytoskeleton and the positioning of the basal bodies at the apical cell surface, which in turn is essential for the normal orientation of elongating ciliary microtubules. Plays a key role in definition of cell polarity via its role in ciliogenesis but not via conversion extension. Has an indirect effect on hedgehog signaling. Proposed to function as core component of the CPLANE (ciliogenesis and planar polarity effectors) complex involved in the recruitment of peripheral IFT-A proteins to basal bodies. Required for recruitment of CPLANE2 to the mother centriole. Binds phosphatidylinositol 3-phosphate with highest affinity, followed by phosphatidylinositol 4-phosphate and phosphatidylinositol 5-phosphate. The polypeptide is Protein inturned (Intu) (Rattus norvegicus (Rat)).